A 518-amino-acid polypeptide reads, in one-letter code: Membrane-bound glycerophospholipid O-acyltransferase 2 (518 aa).

Transmembrane regions (helical) follow at residues 21–41 (PVDQVNFVVCQLFALLAAIWF), 60–80 (TLLGLYLALFCFGWYALHFVI), 87–107 (YLMIIIGVENMHKYCFVFALG), 183–203 (FMGILAGPLCSYKDYITFIEG), 230–250 (IAVAQKLLICGLSLLFHMTIT), and 267–283 (ASWPVRVFYLYLSLMAA). Active-site residues include Asn-341 and His-372. 3 consecutive transmembrane segments (helical) span residues 365–385 (FILSAIWHGVYPGYYLTFLTG), 415–435 (IITWMTTQVAISYTVVPFVLL), and 443–463 (FYSSCYFCLHIASILVLLVFP).

The protein belongs to the membrane-bound acyltransferase family.

The protein localises to the endoplasmic reticulum membrane. It carries out the reaction a 1-acyl-sn-glycero-3-phosphocholine + an acyl-CoA = a 1,2-diacyl-sn-glycero-3-phosphocholine + CoA. It catalyses the reaction a 1-acyl-sn-glycero-3-phosphoethanolamine + an acyl-CoA = a 1,2-diacyl-sn-glycero-3-phosphoethanolamine + CoA. The enzyme catalyses a 1-acyl-sn-glycero-3-phosphate + an acyl-CoA = a 1,2-diacyl-sn-glycero-3-phosphate + CoA. The catalysed reaction is (9Z)-hexadecenoyl-CoA + 1-hexadecanoyl-sn-glycero-3-phosphocholine = 1-hexadecanoyl-2-(9Z-hexadecenoyl)-sn-glycero-3-phosphocholine + CoA. It carries out the reaction 1-hexadecanoyl-sn-glycero-3-phosphoethanolamine + (9Z)-octadecenoyl-CoA = 1-hexadecanoyl-2-(9Z-octadecenoyl)-sn-glycero-3-phosphoethanolamine + CoA. It catalyses the reaction 1-hexadecanoyl-sn-glycero-3-phosphoethanolamine + (9Z)-hexadecenoyl-CoA = 1-hexadecanoyl-2-(9Z)-hexadecenoyl-sn-glycero-3-phosphoethanolamine + CoA. The enzyme catalyses 1-(9Z-octadecenoyl)-sn-glycero-3-phospho-L-serine + hexadecanoyl-CoA = 1-(9Z)-octadecenoyl-2-hexadecanoyl-sn-glycero-3-phosphoserine + CoA. The catalysed reaction is (9Z,12Z)-octadecadienoyl-CoA + 1-hexadecanoyl-sn-glycero-3-phosphocholine = 1-hexadecanoyl-2-(9Z,12Z-octadecadienoyl)-sn-glycero-3-phosphocholine + CoA. It carries out the reaction 1-hexadecanoyl-sn-glycero-3-phosphocholine + (9Z)-octadecenoyl-CoA = 1-hexadecanoyl-2-(9Z-octadecenoyl)-sn-glycero-3-phosphocholine + CoA. It catalyses the reaction 1-hexadecanoyl-sn-glycero-3-phosphate + (9Z)-hexadecenoyl-CoA = 1-hexadecanoyl-2-[(9Z)-hexadec-9-enoyl]-sn-glycero-3-phosphate + CoA. The enzyme catalyses 1-hexadecanoyl-sn-glycero-3-phosphate + (9Z)-octadecenoyl-CoA = 1-hexadecanoyl-2-(9Z-octadecenoyl)-sn-glycero-3-phosphate + CoA. The catalysed reaction is a 1-O-(1Z-alkenyl)-sn-glycero-3-phosphocholine + (9Z)-octadecenoyl-CoA = 1-O-(1Z)-alkenyl-2-(9Z)-octadecenoyl-sn-glycero-3-phosphocholine + CoA. It carries out the reaction a 1-O-(1Z-alkenyl)-sn-glycero-3-phosphoethanolamine + (9Z)-octadecenoyl-CoA = 1-O-(1Z)-alkenyl-2-(9Z)-octadecenoyl-sn-glycero-3-phosphoethanolamine + CoA. It catalyses the reaction 1-octadecanoyl-sn-glycero-3-phosphoethanolamine + (9Z)-octadecenoyl-CoA = 1-octadecanoyl-2-(9Z-octadecenoyl)-sn-glycero-3-phosphoethanolamine + CoA. The enzyme catalyses 1-octadecanoyl-sn-glycero-3-phosphocholine + (9Z)-octadecenoyl-CoA = 1-octadecanoyl-2-(9Z-octadecenoyl)-sn-glycero-3-phosphocholine + CoA. The catalysed reaction is 1-(9Z-octadecenoyl)-sn-glycero-3-phosphoethanolamine + (9Z)-octadecenoyl-CoA = 1,2-di-(9Z-octadecenoyl)-sn-glycero-3-phosphoethanolamine + CoA. It functions in the pathway lipid metabolism; phospholipid metabolism. Acyltransferase which catalyzes the transfer of an acyl group from an acyl-CoA to a lysophospholipid leading to the production of a phospholipid and participates in the reacylation step of the phospholipid remodeling pathway also known as the Lands cycle. May catalyze preferentially the acylation of lysophosphatidylethanolamine (1-acyl-sn-glycero-3-phosphoethanolamine or LPE) and lysophosphatidic acid (LPA) and to a lesser extend lysophosphatidylcholine (LPC) and lysophosphatidylserine (LPS). Prefers oleoyl-CoA as the acyl donor. This Gallus gallus (Chicken) protein is Membrane-bound glycerophospholipid O-acyltransferase 2.